A 193-amino-acid polypeptide reads, in one-letter code: uncharacterized protein (193 aa).

Helical transmembrane passes span 40–56, 63–79, 86–110, and 117–138; these read LYIA…LKLI, AAGL…SSLC, CSGY…IVSC, and FIFP…FQIY. The interval 158–193 is disordered; sequence TTTKLSRSSSAPDLSCPSLSTQPTSPNQSLSAYKKY.

Belongs to the chlamydial CPn_0442/CT_006/TC_0274 family.

Its subcellular location is the cell membrane. This is an uncharacterized protein from Chlamydia muridarum (strain MoPn / Nigg).